A 96-amino-acid chain; its full sequence is Small ribosomal subunit protein bS6 (96 aa).

It belongs to the bacterial ribosomal protein bS6 family.

Functionally, binds together with bS18 to 16S ribosomal RNA. The polypeptide is Small ribosomal subunit protein bS6 (Bacillus mycoides (strain KBAB4) (Bacillus weihenstephanensis)).